The primary structure comprises 749 residues: Protein O-mannosyl-transferase 2 (749 aa).

A disordered region spans residues 1–30 (MAASVVKTPKCPRRGSAKEQQSKASPKSNN). Residues 34 to 54 (NWHWWILLASVFLITFATRFY) form a helical membrane-spanning segment. N-linked (GlcNAc...) asparagine glycosylation is found at Asn-78, Asn-104, and Asn-117. The next 5 helical transmembrane spans lie at 126–146 (YFCT…VYDL), 173–193 (ILLD…MVKI), 204–224 (SVRW…TISV), 226–246 (FVGL…LWLI), and 266–286 (IALI…HLSV). N-linked (GlcNAc...) asparagine glycosylation is found at Asn-288 and Asn-312. MIR domains are found at residues 316–372 (PRDV…IKPH), 382–438 (LQLL…VLIV), and 443–499 (NETV…VEDN). The N-linked (GlcNAc...) asparagine glycan is linked to Asn-443. 4 consecutive transmembrane segments (helical) span residues 572–592 (IWWS…GNAI), 645–665 (LGAA…FWAM), 669–689 (LYFH…GVMF), and 703–723 (VLLG…SPLA). Asn-735 carries an N-linked (GlcNAc...) asparagine glycan.

It belongs to the glycosyltransferase 39 family. As to quaternary structure, interacts with Rt/POMT1.

The protein resides in the endoplasmic reticulum membrane. The enzyme catalyses a di-trans,poly-cis-dolichyl beta-D-mannosyl phosphate + L-seryl-[protein] = 3-O-(alpha-D-mannosyl)-L-seryl-[protein] + a di-trans,poly-cis-dolichyl phosphate + H(+). It catalyses the reaction a di-trans,poly-cis-dolichyl beta-D-mannosyl phosphate + L-threonyl-[protein] = 3-O-(alpha-D-mannosyl)-L-threonyl-[protein] + a di-trans,poly-cis-dolichyl phosphate + H(+). It participates in protein modification; protein glycosylation. In terms of biological role, rt/POMT1 and tw/POMT2 function as a protein O-mannosyltransferase in association with each other to generate and maintain normal muscle development. The chain is Protein O-mannosyl-transferase 2 from Drosophila pseudoobscura pseudoobscura (Fruit fly).